The sequence spans 1941 residues: Myosin-7B (1941 aa).

Residues 30 to 80 (DGKKRVWVPDEQDAYVEAEVKTEATGGKVTVETKDQKVLTVRETEMQPMNP) form the Myosin N-terminal SH3-like domain. Residues 84–785 (DLLEDMAMMT…LLGILEELRD (702 aa)) enclose the Myosin motor domain. 177–184 (GESGAGKT) is an ATP binding site. 2 actin-binding regions span residues 662–684 (LNKL…VPNE) and 764–778 (QFGH…GLLG). The 30-residue stretch at 788–817 (LAKVLTLLQARSRGRLMRLEYQRMLGGRDA) folds into the IQ domain. Positions 846-1935 (LLRSAQAEEE…KLRARSRDAL (1090 aa)) form a coiled coil. The disordered stretch occupies residues 1887–1941 (RQFEEAEQQASTNLAKYRKAQHELDDAEERADMAETQANKLRARSRDALGPKHKE). Over residues 1930 to 1941 (RSRDALGPKHKE) the composition is skewed to basic and acidic residues.

It belongs to the TRAFAC class myosin-kinesin ATPase superfamily. Myosin family. As to quaternary structure, muscle myosin is a hexameric protein that consists of 2 heavy chain subunits (MHC), 2 alkali light chain subunits (MLC) and 2 regulatory light chain subunits (MLC-2).

It is found in the membrane. Involved in muscle contraction. The sequence is that of Myosin-7B (Myh7b) from Mus musculus (Mouse).